Reading from the N-terminus, the 700-residue chain is MSKPLPRKLFVTTALPYANGAFHVGHIMEYIQADIWVRFQRMQGNEVHFVGADDAHGAPIMIAAEKAGLTPQQFVANIAAGRKQYLDGFHIEFDNWSSTDSPENHELSREIYRRLRDDAKLITTKSVEQFYDPVKEMFLPDRYIKGECPKCGTKDQYGDSCENCSAVYAPTDLKHPYSTLTGATPVRKSSDHFFFRLSDPKCVAFLREWALDGQRLQSEVANKAKEWLEGEGGLGDWDISRDAPYFGIEIPDAPGKYFYVWLDAPVGYLATLKNYFDKTGRDFDAFMADPSTEQYHFIGKDITYFHTLFWPAMLKFADMKVPNNVFVHGFITVSGEKMSKSRGTGISPLRYLEIGMNPEWLRYYIAAKLSSKVEDIDFTSDDFIARVNSDLIGKYINIASRAAGFITKKFDGRVATDWATSDDAFLSRLRNVASEIQALYDQREYGKALRAIMEQADAINAYVDANKPWELAKDPAKEAALQEVCSRLLEAFRILTIYLKPVLPALAKQVEAQLNIAPLEWHHIITPLPHGHQINPYVHLMTRVEPKMLDALFDMPALVDATVGVPTSPSNKDGDTNGNGHAIESIAPEIKIDDFAKIDLRIAKIVNCEHVEGSDKLLRLTLDVGEGRMRNVFSGIKSAYKPEDLIGKLTVMVANLAPRKMKFGISEGMVLAASAADEKANPGIYILNPWPGAEPGMRVG.

The 'HIGH' region signature appears at 16–26 (PYANGAFHVGH). Residues cysteine 148, cysteine 151, cysteine 161, and cysteine 164 each coordinate Zn(2+). The 'KMSKS' region motif lies at 337–341 (KMSKS). Residue lysine 340 participates in ATP binding. One can recognise a tRNA-binding domain in the interval 594-700 (DFAKIDLRIA…PGAEPGMRVG (107 aa)).

It belongs to the class-I aminoacyl-tRNA synthetase family. MetG type 1 subfamily. In terms of assembly, homodimer. Zn(2+) serves as cofactor.

The protein resides in the cytoplasm. The enzyme catalyses tRNA(Met) + L-methionine + ATP = L-methionyl-tRNA(Met) + AMP + diphosphate. Is required not only for elongation of protein synthesis but also for the initiation of all mRNA translation through initiator tRNA(fMet) aminoacylation. The chain is Methionine--tRNA ligase from Janthinobacterium sp. (strain Marseille) (Minibacterium massiliensis).